Reading from the N-terminus, the 714-residue chain is ABC transporter B family member 28 (714 aa).

5 helical membrane-spanning segments follow: residues L109–F129, I161–L181, I240–A260, V340–G360, and E361–V381. The ABC transmembrane type-1 domain maps to L109–G393. The ABC transporter domain occupies V470–T708. ATP is bound at residue G505–S512.

This sequence belongs to the ABC transporter superfamily. ABCB family. Multidrug resistance exporter (TC 3.A.1.201) subfamily.

The protein resides in the membrane. This Arabidopsis thaliana (Mouse-ear cress) protein is ABC transporter B family member 28 (ABCB28).